We begin with the raw amino-acid sequence, 581 residues long: Multicopper oxidase LPR1 (581 aa).

Residues 1–28 (MESLLCRRRIKRVMVLIIALTWLRSTCG) form the signal peptide. Residues histidine 148, histidine 150, histidine 196, and histidine 198 each coordinate Cu cation. N-linked (GlcNAc...) asparagine glycosylation is found at asparagine 254, asparagine 298, asparagine 386, and asparagine 458. Positions 283-352 (PRLNVRRRKY…DVVVDFYKSP (70 aa)) constitute a Plastocyanin-like domain. 3 residues coordinate Cu cation: histidine 464, histidine 467, and histidine 469. Asparagine 546 is a glycosylation site (N-linked (GlcNAc...) asparagine). Histidine 562, cysteine 563, histidine 564, histidine 568, and methionine 573 together coordinate Cu cation.

The protein belongs to the multicopper oxidase family. Requires Cu cation as cofactor.

It is found in the endoplasmic reticulum membrane. Multicopper oxidase that may be involved in copper homeostasis and oxidative stress response, and that is necessary for root growth inhibition by low phosphate conditions. Functions together with LPR2 and PDR2 in a common pathway that adjusts root meristem activity to phosphate availability. Oxidizes the substrate 2,2'-azinobis-(3-ethylbenzthiazoline-6-sulphonate) in vitro. This Arabidopsis thaliana (Mouse-ear cress) protein is Multicopper oxidase LPR1 (LPR1).